Here is a 99-residue protein sequence, read N- to C-terminus: UPF0125 protein PM0166 (99 aa).

The protein belongs to the UPF0125 (RnfH) family.

This is UPF0125 protein PM0166 from Pasteurella multocida (strain Pm70).